The sequence spans 280 residues: Tryptophan synthase alpha chain (280 aa).

Active-site proton acceptor residues include Glu50 and Asp61.

The protein belongs to the TrpA family. In terms of assembly, tetramer of two alpha and two beta chains.

It carries out the reaction (1S,2R)-1-C-(indol-3-yl)glycerol 3-phosphate + L-serine = D-glyceraldehyde 3-phosphate + L-tryptophan + H2O. It functions in the pathway amino-acid biosynthesis; L-tryptophan biosynthesis; L-tryptophan from chorismate: step 5/5. Its function is as follows. The alpha subunit is responsible for the aldol cleavage of indoleglycerol phosphate to indole and glyceraldehyde 3-phosphate. The polypeptide is Tryptophan synthase alpha chain (Methylorubrum extorquens (strain CM4 / NCIMB 13688) (Methylobacterium extorquens)).